The primary structure comprises 437 residues: Lipid II isoglutaminyl synthase (glutamine-hydrolyzing) subunit MurT (437 aa).

Zn(2+)-binding residues include cysteine 202, cysteine 205, cysteine 224, and cysteine 226. The active site involves aspartate 349.

The protein belongs to the MurCDEF family. MurT subfamily. As to quaternary structure, forms a heterodimer with GatD.

It catalyses the reaction beta-D-GlcNAc-(1-&gt;4)-Mur2Ac(oyl-L-Ala-gamma-D-Glu-L-Lys-D-Ala-D-Ala)-di-trans,octa-cis-undecaprenyl diphosphate + L-glutamine + ATP + H2O = beta-D-GlcNAc-(1-&gt;4)-Mur2Ac(oyl-L-Ala-D-isoglutaminyl-L-Lys-D-Ala-D-Ala)-di-trans,octa-cis-undecaprenyl diphosphate + L-glutamate + ADP + phosphate + H(+). It carries out the reaction beta-D-GlcNAc-(1-&gt;4)-Mur2Ac(oyl-L-Ala-gamma-D-Glu-L-Lys-D-Ala-D-Ala)-di-trans,octa-cis-undecaprenyl diphosphate + ATP = beta-D-GlcNAc-(1-&gt;4)-Mur2Ac(oyl-L-Ala-gamma-D-O-P-Glu-L-Lys-D-Ala-D-Ala)-di-trans,octa-cis-undecaprenyl diphosphate + ADP. The enzyme catalyses beta-D-GlcNAc-(1-&gt;4)-Mur2Ac(oyl-L-Ala-gamma-D-O-P-Glu-L-Lys-D-Ala-D-Ala)-di-trans,octa-cis-undecaprenyl diphosphate + NH4(+) = beta-D-GlcNAc-(1-&gt;4)-Mur2Ac(oyl-L-Ala-D-isoglutaminyl-L-Lys-D-Ala-D-Ala)-di-trans,octa-cis-undecaprenyl diphosphate + phosphate + H(+). Its pathway is cell wall biogenesis; peptidoglycan biosynthesis. Functionally, the lipid II isoglutaminyl synthase complex catalyzes the formation of alpha-D-isoglutamine in the cell wall lipid II stem peptide. The MurT subunit catalyzes the ATP-dependent amidation of D-glutamate residue of lipid II, converting it to an isoglutamine residue. The chain is Lipid II isoglutaminyl synthase (glutamine-hydrolyzing) subunit MurT from Staphylococcus aureus (strain COL).